The primary structure comprises 1093 residues: Isoleucine--tRNA ligase, chloroplastic/mitochondrial (1093 aa).

The disordered stretch occupies residues 69–103 (PNNEFGHSSKRRSRGPVMAAKKASEGEKQEDGKYK). Residues 90-103 (KASEGEKQEDGKYK) show a composition bias toward basic and acidic residues. Positions 155 to 165 (PYANGDLHMGH) match the 'HIGH' region motif. E682 serves as a coordination point for L-isoleucyl-5'-AMP. A 'KMSKS' region motif is present at residues 723–727 (KMSKS). Position 726 (K726) interacts with ATP. 4 residues coordinate Zn(2+): C1050, C1053, C1070, and C1073.

Belongs to the class-I aminoacyl-tRNA synthetase family.

The protein resides in the plastid. It is found in the chloroplast. Its subcellular location is the mitochondrion. It carries out the reaction tRNA(Ile) + L-isoleucine + ATP = L-isoleucyl-tRNA(Ile) + AMP + diphosphate. The polypeptide is Isoleucine--tRNA ligase, chloroplastic/mitochondrial (Arabidopsis thaliana (Mouse-ear cress)).